Here is a 505-residue protein sequence, read N- to C-terminus: Chromosomal replication initiator protein DnaA (505 aa).

The segment at 1-90 (MSVELWQQCV…RRSSAPRAAP (90 aa)) is domain I, interacts with DnaA modulators. The domain II stretch occupies residues 91-168 (NAPVSAAVAA…QVEGALKHTS (78 aa)). The interval 169–385 (YLNRTFTFDT…GALKRVIAHS (217 aa)) is domain III, AAA+ region. 4 residues coordinate ATP: glycine 213, glycine 215, lysine 216, and threonine 217. Residues 386–505 (HFMGRDITIE…YKNLLRTLTT (120 aa)) form a domain IV, binds dsDNA region.

It belongs to the DnaA family. Oligomerizes as a right-handed, spiral filament on DNA at oriC.

The protein localises to the cytoplasm. Functionally, plays an essential role in the initiation and regulation of chromosomal replication. ATP-DnaA binds to the origin of replication (oriC) to initiate formation of the DNA replication initiation complex once per cell cycle. Binds the DnaA box (a 9 base pair repeat at the origin) and separates the double-stranded (ds)DNA. Forms a right-handed helical filament on oriC DNA; dsDNA binds to the exterior of the filament while single-stranded (ss)DNA is stabiized in the filament's interior. The ATP-DnaA-oriC complex binds and stabilizes one strand of the AT-rich DNA unwinding element (DUE), permitting loading of DNA polymerase. After initiation quickly degrades to an ADP-DnaA complex that is not apt for DNA replication. Binds acidic phospholipids. The chain is Chromosomal replication initiator protein DnaA from Pseudomonas putida (strain ATCC 700007 / DSM 6899 / JCM 31910 / BCRC 17059 / LMG 24140 / F1).